Reading from the N-terminus, the 829-residue chain is Disintegrin and metalloproteinase domain-containing protein 23 (829 aa).

A signal peptide spans 1–55 (MKPPGSISRRPTLTGCSLPGASCGPGRCPAGPVPARAPPCRLLLVLLLLPALATS). The propeptide occupies 56 to 283 (SRPRARGAAA…ELQWLRRRKR (228 aa)). 4 N-linked (GlcNAc...) asparagine glycosylation sites follow: Asn72, Asn92, Asn97, and Asn260. Residues 284 to 789 (AVNPSRGVFE…EGPKGPSATN (506 aa)) lie on the Extracellular side of the membrane. In terms of domain architecture, Peptidase M12B spans 296–493 (KYLELMIVND…GGGACLFNRP (198 aa)). 3 cysteine pairs are disulfide-bonded: Cys405/Cys488, Cys447/Cys472, and Cys449/Cys456. In terms of domain architecture, Disintegrin spans 499–585 (PTECGNGYVE…QCPPNLHKQD (87 aa)). Asn544 and Asn545 each carry an N-linked (GlcNAc...) asparagine glycan. The cysteines at positions 557 and 577 are disulfide-linked. N-linked (GlcNAc...) asparagine glycosylation is found at Asn661 and Asn729. Residues 729-766 (NMSSCPLDSRGKVCSGHGVCSNEATCICDFTWAGTDCS) enclose the EGF-like domain. Disulfide bonds link Cys733–Cys748, Cys742–Cys754, and Cys756–Cys765. Residues 790–810 (LIIGSIAGAILVAAIVLGGTG) form a helical membrane-spanning segment. The Cytoplasmic segment spans residues 811–829 (WGFKNVKKRRFDPTQQGPI).

In terms of assembly, can bind to LGI1 and LGI4. In terms of tissue distribution, brain specific.

The protein resides in the cell membrane. The protein localises to the secreted. May play a role in cell-cell and cell-matrix interactions. This is a non-catalytic metalloprotease-like protein. In Mus musculus (Mouse), this protein is Disintegrin and metalloproteinase domain-containing protein 23 (Adam23).